A 509-amino-acid polypeptide reads, in one-letter code: 2,3-bisphosphoglycerate-independent phosphoglycerate mutase (509 aa).

Asp-11 contacts Mn(2+). Residue Tyr-35 is modified to Phosphotyrosine. Ser-61 provides a ligand contact to Mn(2+). The active-site Phosphoserine intermediate is Ser-61. Substrate-binding positions include His-122, Arg-152–Asp-153, Arg-184, Arg-190, Arg-260–Arg-263, and Lys-335. Asp-402, His-406, Asp-443, His-444, and His-461 together coordinate Mn(2+).

It belongs to the BPG-independent phosphoglycerate mutase family. In terms of assembly, monomer. Mn(2+) is required as a cofactor.

The enzyme catalyses (2R)-2-phosphoglycerate = (2R)-3-phosphoglycerate. It participates in carbohydrate degradation; glycolysis; pyruvate from D-glyceraldehyde 3-phosphate: step 3/5. Essential for rapid growth and for sporulation. Catalyzes the interconversion of 2-phosphoglycerate and 3-phosphoglycerate. This Bacillus thuringiensis (strain Al Hakam) protein is 2,3-bisphosphoglycerate-independent phosphoglycerate mutase.